The sequence spans 207 residues: MANVKLFDQTGKEVSTVELNDAIFGIEPNESVVFDVVISQRASLRQGTHAVKNRSAVSGGGRKPWRQKGTGRARQGSIRSPQWRGGGVVFGPTPRSYGYKLPQKVRRLALKSVYSAKVAEDKFVAVESLSFAAPKTAEFAKVLSALSIDTKVLVLVEEGNEFAALSARNLPNVAVATAATASVLDIVSADKLLVTKEAISTIEEVLA.

Residues 49–78 (HAVKNRSAVSGGGRKPWRQKGTGRARQGSI) are disordered.

The protein belongs to the universal ribosomal protein uL4 family. As to quaternary structure, part of the 50S ribosomal subunit.

One of the primary rRNA binding proteins, this protein initially binds near the 5'-end of the 23S rRNA. It is important during the early stages of 50S assembly. It makes multiple contacts with different domains of the 23S rRNA in the assembled 50S subunit and ribosome. Its function is as follows. Forms part of the polypeptide exit tunnel. The sequence is that of Large ribosomal subunit protein uL4 from Streptococcus equi subsp. zooepidemicus (strain MGCS10565).